Consider the following 406-residue polypeptide: Cysteine desulfurase (406 aa).

At Lys226 the chain carries N6-(pyridoxal phosphate)lysine. Residue Cys364 is the Cysteine persulfide intermediate of the active site.

The protein belongs to the class-V pyridoxal-phosphate-dependent aminotransferase family. Csd subfamily. In terms of assembly, homodimer. Interacts with SufE and the SufBCD complex composed of SufB, SufC and SufD. The interaction with SufE is required to mediate the direct transfer of the sulfur atom from the S-sulfanylcysteine. It depends on pyridoxal 5'-phosphate as a cofactor.

The protein resides in the cytoplasm. It catalyses the reaction (sulfur carrier)-H + L-cysteine = (sulfur carrier)-SH + L-alanine. The catalysed reaction is L-selenocysteine + AH2 = hydrogenselenide + L-alanine + A + H(+). The protein operates within cofactor biosynthesis; iron-sulfur cluster biosynthesis. Its function is as follows. Cysteine desulfurases mobilize the sulfur from L-cysteine to yield L-alanine, an essential step in sulfur metabolism for biosynthesis of a variety of sulfur-containing biomolecules. Component of the suf operon, which is activated and required under specific conditions such as oxidative stress and iron limitation. Acts as a potent selenocysteine lyase in vitro, that mobilizes selenium from L-selenocysteine. Selenocysteine lyase activity is however unsure in vivo. The chain is Cysteine desulfurase from Yersinia pseudotuberculosis serotype O:1b (strain IP 31758).